We begin with the raw amino-acid sequence, 101 residues long: Gamma-secretase subunit PEN-2 (101 aa).

The Cytoplasmic portion of the chain corresponds to 1-17 (MNLERIPNEEKLSLCRR). An intramembrane region (helical) is located at residues 18-36 (YYLGGFAFLPFLWLVNILW). Residues 37 to 57 (FFKEAFLKPAYTEQPQIKSYV) are Cytoplasmic-facing. Residues 58-78 (KKSALGLLLWVAVLTTWITVF) form a helical membrane-spanning segment. Topologically, residues 79-101 (QHFRAQWGEVGDYLSFTIPLGTA) are lumenal.

It belongs to the PEN-2 family. In terms of assembly, the functional gamma-secretase complex is composed of at least four polypeptides: a presenilin homodimer (psen1 or psen2), nicastrin (ncstn), aph1 (aph1a or aph1b) and psenen.

The protein localises to the endoplasmic reticulum membrane. Its subcellular location is the golgi apparatus. It localises to the golgi stack membrane. It is found in the cell membrane. The protein resides in the membrane. Its function is as follows. Essential subunit of the gamma-secretase complex, an endoprotease complex that catalyzes the intramembrane cleavage of integral membrane proteins such as Notch receptors and APP (amyloid-beta precursor protein). The gamma-secretase complex plays a role in Notch and Wnt signaling cascades and regulation of downstream processes via its role in processing key regulatory proteins. In Danio rerio (Zebrafish), this protein is Gamma-secretase subunit PEN-2 (psenen).